A 169-amino-acid polypeptide reads, in one-letter code: E1B protein, small T-antigen (169 aa).

It belongs to the adenoviridae E1B 19 kDa protein family.

This is E1B protein, small T-antigen from Canis lupus familiaris (Dog).